A 64-amino-acid polypeptide reads, in one-letter code: Cytochrome b-c1 complex subunit 9 (64 aa).

At 2–18 (SSPTIPSRLYSLLFRRT) the chain is on the mitochondrial matrix side. The chain crosses the membrane as a helical span at residues 19–43 (STFALTIAVGALFFERAFDQGADAI). The Mitochondrial intermembrane segment spans residues 44 to 63 (YEHINEGKLWKHIKHKYENK).

The protein belongs to the UQCR10/QCR9 family. In terms of assembly, component of the ubiquinol-cytochrome c oxidoreductase (cytochrome b-c1 complex, complex III, CIII), a multisubunit enzyme composed of 11 subunits. The complex is composed of 3 respiratory subunits cytochrome b, cytochrome c1 and Rieske protein UQCRFS1, 2 core protein subunits UQCRC1/QCR1 and UQCRC2/QCR2, and 6 low-molecular weight protein subunits UQCRH/QCR6, UQCRB/QCR7, UQCRQ/QCR8, UQCR10/QCR9, UQCR11/QCR10 and subunit 9, the cleavage product of Rieske protein UQCRFS1. The complex exists as an obligatory dimer and forms supercomplexes (SCs) in the inner mitochondrial membrane with NADH-ubiquinone oxidoreductase (complex I, CI) and cytochrome c oxidase (complex IV, CIV), resulting in different assemblies (supercomplex SCI(1)III(2)IV(1) and megacomplex MCI(2)III(2)IV(2)). Interacts with STMP1.

It localises to the mitochondrion inner membrane. In terms of biological role, component of the ubiquinol-cytochrome c oxidoreductase, a multisubunit transmembrane complex that is part of the mitochondrial electron transport chain which drives oxidative phosphorylation. The respiratory chain contains 3 multisubunit complexes succinate dehydrogenase (complex II, CII), ubiquinol-cytochrome c oxidoreductase (cytochrome b-c1 complex, complex III, CIII) and cytochrome c oxidase (complex IV, CIV), that cooperate to transfer electrons derived from NADH and succinate to molecular oxygen, creating an electrochemical gradient over the inner membrane that drives transmembrane transport and the ATP synthase. The cytochrome b-c1 complex catalyzes electron transfer from ubiquinol to cytochrome c, linking this redox reaction to translocation of protons across the mitochondrial inner membrane, with protons being carried across the membrane as hydrogens on the quinol. In the process called Q cycle, 2 protons are consumed from the matrix, 4 protons are released into the intermembrane space and 2 electrons are passed to cytochrome c. This chain is Cytochrome b-c1 complex subunit 9 (Uqcr10), found in Mus musculus (Mouse).